Reading from the N-terminus, the 510-residue chain is Maturase K (510 aa).

It belongs to the intron maturase 2 family. MatK subfamily.

It localises to the plastid. Its subcellular location is the chloroplast. In terms of biological role, usually encoded in the trnK tRNA gene intron. Probably assists in splicing its own and other chloroplast group II introns. This is Maturase K from Thuja plicata (Western red-cedar).